The following is a 378-amino-acid chain: GTP 3',8-cyclase 3 (378 aa).

In terms of domain architecture, Radical SAM core spans 40–259 (RCGRTMGDLR…STLGKKYGPI (220 aa)). Arg49 contacts GTP. Cys56 and Cys60 together coordinate [4Fe-4S] cluster. An S-adenosyl-L-methionine-binding site is contributed by Tyr62. Position 63 (Cys63) interacts with [4Fe-4S] cluster. Residue Arg99 coordinates GTP. Gly103 provides a ligand contact to S-adenosyl-L-methionine. Residue Thr134 participates in GTP binding. Ser158 lines the S-adenosyl-L-methionine pocket. Residue Lys195 coordinates GTP. Met229 contributes to the S-adenosyl-L-methionine binding site. [4Fe-4S] cluster contacts are provided by Cys292 and Cys295. 297–299 (RSR) contacts GTP. Cys309 is a [4Fe-4S] cluster binding site.

Belongs to the radical SAM superfamily. MoaA family. Monomer and homodimer. It depends on [4Fe-4S] cluster as a cofactor.

The catalysed reaction is GTP + AH2 + S-adenosyl-L-methionine = (8S)-3',8-cyclo-7,8-dihydroguanosine 5'-triphosphate + 5'-deoxyadenosine + L-methionine + A + H(+). It participates in cofactor biosynthesis; molybdopterin biosynthesis. Catalyzes the cyclization of GTP to (8S)-3',8-cyclo-7,8-dihydroguanosine 5'-triphosphate. In Mycobacterium bovis (strain ATCC BAA-935 / AF2122/97), this protein is GTP 3',8-cyclase 3.